A 660-amino-acid polypeptide reads, in one-letter code: Bifunctional polymyxin resistance protein ArnA (660 aa).

Positions 1–304 (MKAVIFAYHD…TLGLVAGARL (304 aa)) are formyltransferase ArnAFT. The active-site Proton donor; for formyltransferase activity is histidine 104. (6R)-10-formyltetrahydrofolate is bound by residues arginine 114 and 136-140 (VKRAD). Positions 314 to 660 (RRIRVLILGV…RSVDVAERAS (347 aa)) are dehydrogenase ArnADH. NAD(+) contacts are provided by residues aspartate 347 and 368–369 (DI). UDP-alpha-D-glucuronate-binding positions include alanine 393, tyrosine 398, and 432–433 (TS). The Proton acceptor; for decarboxylase activity role is filled by glutamate 434. Residues arginine 460, asparagine 492, 526–535 (KLIDGGQQKR), and tyrosine 613 each bind UDP-alpha-D-glucuronate. The active-site Proton donor; for decarboxylase activity is arginine 619.

It in the N-terminal section; belongs to the Fmt family. UDP-L-Ara4N formyltransferase subfamily. In the C-terminal section; belongs to the NAD(P)-dependent epimerase/dehydratase family. UDP-glucuronic acid decarboxylase subfamily. As to quaternary structure, homohexamer, formed by a dimer of trimers.

It carries out the reaction UDP-alpha-D-glucuronate + NAD(+) = UDP-beta-L-threo-pentopyranos-4-ulose + CO2 + NADH. The enzyme catalyses UDP-4-amino-4-deoxy-beta-L-arabinose + (6R)-10-formyltetrahydrofolate = UDP-4-deoxy-4-formamido-beta-L-arabinose + (6S)-5,6,7,8-tetrahydrofolate + H(+). It participates in nucleotide-sugar biosynthesis; UDP-4-deoxy-4-formamido-beta-L-arabinose biosynthesis; UDP-4-deoxy-4-formamido-beta-L-arabinose from UDP-alpha-D-glucuronate: step 1/3. The protein operates within nucleotide-sugar biosynthesis; UDP-4-deoxy-4-formamido-beta-L-arabinose biosynthesis; UDP-4-deoxy-4-formamido-beta-L-arabinose from UDP-alpha-D-glucuronate: step 3/3. It functions in the pathway bacterial outer membrane biogenesis; lipopolysaccharide biosynthesis. Functionally, bifunctional enzyme that catalyzes the oxidative decarboxylation of UDP-glucuronic acid (UDP-GlcUA) to UDP-4-keto-arabinose (UDP-Ara4O) and the addition of a formyl group to UDP-4-amino-4-deoxy-L-arabinose (UDP-L-Ara4N) to form UDP-L-4-formamido-arabinose (UDP-L-Ara4FN). The modified arabinose is attached to lipid A and is required for resistance to polymyxin and cationic antimicrobial peptides. This is Bifunctional polymyxin resistance protein ArnA from Salmonella paratyphi B (strain ATCC BAA-1250 / SPB7).